A 609-amino-acid chain; its full sequence is Indole-3-acetic acid-amido synthetase GH3.17 (609 aa).

It belongs to the IAA-amido conjugating enzyme family.

Functionally, catalyzes the synthesis of indole-3-acetic acid (IAA)-amino acid conjugates, providing a mechanism for the plant to cope with the presence of excess auxin. Strongly reactive with Glu, Gln, Trp, Asp, Ala, Leu, Phe, Gly, Tyr, Met, Ile and Val. Appears to favor Glu over Asp while the other GH3 favor Asp over Glu. Little or no product formation with His, Ser, Thr, Arg, Lys, or Cys. Also active on pyruvic and butyric acid analogs of IAA, PAA and the synthetic auxin naphthaleneacetic acid (NAA). The two chlorinated synthetic auxin herbicides 2,4-D and 3,6-dichloro-o-anisic acid (dicamba) cannot be used as substrates. This is Indole-3-acetic acid-amido synthetase GH3.17 (GH3.17) from Arabidopsis thaliana (Mouse-ear cress).